The sequence spans 239 residues: Uridylate kinase (239 aa).

13–16 (KLSG) contributes to the ATP binding site. Glycine 55 is a binding site for UMP. ATP-binding residues include glycine 56 and arginine 60. Residues aspartate 75 and 136-143 (TGNPFFTT) contribute to the UMP site. 4 residues coordinate ATP: threonine 163, asparagine 164, tyrosine 169, and aspartate 172.

Belongs to the UMP kinase family. As to quaternary structure, homohexamer.

It localises to the cytoplasm. It catalyses the reaction UMP + ATP = UDP + ADP. It participates in pyrimidine metabolism; CTP biosynthesis via de novo pathway; UDP from UMP (UMPK route): step 1/1. Its activity is regulated as follows. Inhibited by UTP. Catalyzes the reversible phosphorylation of UMP to UDP. This chain is Uridylate kinase, found in Neisseria meningitidis serogroup C / serotype 2a (strain ATCC 700532 / DSM 15464 / FAM18).